Here is a 239-residue protein sequence, read N- to C-terminus: 2-C-methyl-D-erythritol 4-phosphate cytidylyltransferase (239 aa).

It belongs to the IspD/TarI cytidylyltransferase family. IspD subfamily. As to quaternary structure, homodimer.

It catalyses the reaction 2-C-methyl-D-erythritol 4-phosphate + CTP + H(+) = 4-CDP-2-C-methyl-D-erythritol + diphosphate. It functions in the pathway isoprenoid biosynthesis; isopentenyl diphosphate biosynthesis via DXP pathway; isopentenyl diphosphate from 1-deoxy-D-xylulose 5-phosphate: step 2/6. Its function is as follows. Catalyzes the formation of 4-diphosphocytidyl-2-C-methyl-D-erythritol from CTP and 2-C-methyl-D-erythritol 4-phosphate (MEP). The polypeptide is 2-C-methyl-D-erythritol 4-phosphate cytidylyltransferase (Sodalis glossinidius (strain morsitans)).